The primary structure comprises 570 residues: Sulfite reductase [NADPH] hemoprotein beta-component (570 aa).

The [4Fe-4S] cluster site is built by Cys434, Cys440, Cys479, and Cys483. Cys483 lines the siroheme pocket.

It belongs to the nitrite and sulfite reductase 4Fe-4S domain family. Alpha(8)-beta(8). The alpha component is a flavoprotein, the beta component is a hemoprotein. It depends on siroheme as a cofactor. Requires [4Fe-4S] cluster as cofactor.

The catalysed reaction is hydrogen sulfide + 3 NADP(+) + 3 H2O = sulfite + 3 NADPH + 4 H(+). The protein operates within sulfur metabolism; hydrogen sulfide biosynthesis; hydrogen sulfide from sulfite (NADPH route): step 1/1. In terms of biological role, component of the sulfite reductase complex that catalyzes the 6-electron reduction of sulfite to sulfide. This is one of several activities required for the biosynthesis of L-cysteine from sulfate. This is Sulfite reductase [NADPH] hemoprotein beta-component from Klebsiella pneumoniae subsp. pneumoniae (strain ATCC 700721 / MGH 78578).